The following is a 485-amino-acid chain: Glutathione gamma-glutamylcysteinyltransferase 1 (485 aa).

The Peptidase C83 domain occupies 1–221 (MAMASLYRRS…GFMLISRPHR (221 aa)). Active-site residues include cysteine 56, histidine 162, and aspartate 180.

The protein belongs to the phytochelatin synthase family. As to expression, expressed in roots and shoots.

The enzyme catalyses [Glu(-Cys)](n)-Gly + glutathione + H(+) = [Glu(-Cys)](n+1)-Gly + glycine. Its activity is regulated as follows. Requires cadmium for activity. Also activated in vitro or in heterologous system by Ag(+), Hg(+), Zn(2+), Cu(2+), Fe(2+) or Fe(3+) ions, but not by Co(2+) or Ni(2+) ions. Involved in the synthesis of phytochelatins (PC) and homophytochelatins (hPC), the heavy-metal-binding peptides of plants. Also involved in glutathione-conjugates degradation. The polypeptide is Glutathione gamma-glutamylcysteinyltransferase 1 (PCS1) (Arabidopsis thaliana (Mouse-ear cress)).